The following is a 1366-amino-acid chain: Collagen alpha-2(I) chain (1366 aa).

The first 22 residues, 1-22 (MLSFVDTRTLLLLAVTLCLATC), serve as a signal peptide directing secretion. At Gln-23 the chain carries Pyrrolidone carboxylic acid. A propeptide spans 23–79 (QSLQEETVRKGPAGDRGPRGERGPPGPPGRDGEDGPTGPPGPPGPPGPPGLGGNFAA) (N-terminal propeptide). The span at 28 to 44 (ETVRKGPAGDRGPRGER) shows a compositional bias: basic and acidic residues. Positions 28–1130 (ETVRKGPAGD…QPRSAPSLRP (1103 aa)) are disordered. 4-hydroxyproline occurs at positions 47, 50, 62, 65, 68, and 71. Residues 59–71 (TGPPGPPGPPGPP) are compositionally biased toward pro residues. The residue at position 80 (Gln-80) is a Pyrrolidone carboxylic acid. At Lys-84 the chain carries Allysine. The segment covering 84 to 94 (KGVGLGPGPMG) has biased composition (gly residues). A compositionally biased stretch (low complexity) spans 95 to 140 (LMGPRGPPGAAGAPGPQGFQGPAGEPGEPGQTGPAGARGPAGPPGK). A 4-hydroxyproline mark is found at Pro-102 and Pro-108. The span at 141-155 (AGEDGHPGKPGRPGE) shows a compositional bias: basic and acidic residues. A 5-hydroxylysine; alternate modification is found at Lys-177. Lys-177 carries an O-linked (Gal...) hydroxylysine; alternate glycan. Low complexity-rich tracts occupy residues 225-254 (VGAPGPAGARGSDGSVGPVGPAGPIGSAGP), 269-293 (AVGNAGPAGPAGPRGEVGLPGLSGP), 300-321 (PGANGLTGAKGAAGLPGVAGAP), 330-345 (PGPVGAAGATGARGLV), 398-410 (LRGSPGSRGLPGA), and 419-434 (PPGSRGASGPAGVRGP). 4-hydroxyproline is present on residues Pro-420, Pro-441, and Pro-444. 2 stretches are compositionally biased toward low complexity: residues 470-489 (LPGIDGRPGPIGPAGARGEP) and 513-531 (AGLAGARGAPGPDGNNGAQ). Residues 538-547 (GVQGGKGEQG) show a composition bias toward gly residues. Low complexity-rich tracts occupy residues 594–611 (PGESGAAGPTGPIGSRGP), 623–648 (EPGVVGAVGTAGPSGPSGLPGERGAA), 663–710 (RGEI…PRGS), and 717–737 (VGPAGPNGFAGPAGAAGQPGA). Residues 738 to 747 (KGERGAKGPK) show a composition bias toward basic and acidic residues. The segment covering 752–765 (VVGPTGPVGAAGPA) has biased composition (low complexity). Residues 775 to 784 (GSRGDGGPPG) are compositionally biased toward gly residues. 5 stretches are compositionally biased toward low complexity: residues 786 to 795 (TGFPGAAGRT), 849 to 876 (SGEAGTAGPPGTPGPQGLLGAPGILGLP), 884 to 932 (LPGV…NPGN), 956 to 974 (PVGAAGAPGPHGPVGPAGK), and 983 to 1001 (PSGPVGPAGAVGPRGPSGP). Residues 1005–1016 (RGDKGEPGEKGP) show a composition bias toward basic and acidic residues. Pro residues predominate over residues 1089-1101 (AGPPGPPGPPGPP). A propeptide spans 1120-1366 (DQPRSAPSLR…FVDIGPVCFK (247 aa)) (C-terminal propeptide). Residues 1133-1366 (YEVDATLKSL…FVDIGPVCFK (234 aa)) enclose the Fibrillar collagen NC1 domain. 3 disulfide bridges follow: Cys-1163–Cys-1195, Cys-1203–Cys-1364, and Cys-1272–Cys-1317. Positions 1181, 1183, 1184, 1186, and 1189 each coordinate Ca(2+). Asn-1267 carries an N-linked (GlcNAc...) asparagine glycan.

Belongs to the fibrillar collagen family. As to quaternary structure, trimers of one alpha 2(I) and two alpha 1(I) chains. Interacts (via C-terminus) with TMEM131 (via PapD-L domain); the interaction is direct and is involved in assembly and TRAPPIII ER-to-Golgi transport complex-dependent secretion of collagen. Post-translationally, prolines at the third position of the tripeptide repeating unit (G-X-Y) are hydroxylated in some or all of the chains. As to expression, forms the fibrils of tendon, ligaments and bones. In bones the fibrils are mineralized with calcium hydroxyapatite.

It is found in the secreted. The protein localises to the extracellular space. The protein resides in the extracellular matrix. Its function is as follows. Type I collagen is a member of group I collagen (fibrillar forming collagen). The protein is Collagen alpha-2(I) chain (COL1A2) of Homo sapiens (Human).